The chain runs to 1289 residues: Long-tail fiber proximal subunit (1289 aa).

It belongs to the tevenvirinae long-tail fiber proximal subunit protein family. As to quaternary structure, the long-tail fibers are trimeric, with a stoichiometry of gp34/gp37/gp36/gp35 of 3:3:3:1.

The protein localises to the virion. Its function is as follows. Structural component of the proximal-half of the long-tail fiber. The long-tail fibers of T4 are about 1600 Angstroms long with a kink in the middle that divides the fiber into proximal and distal halves. This chain is Long-tail fiber proximal subunit (34), found in Escherichia coli (Bacteriophage T4).